The sequence spans 616 residues: Chaperone protein DnaK (616 aa).

Residue Thr-174 is modified to Phosphothreonine; by autocatalysis. The tract at residues 576-616 (QASAPGAGPEGASGGFGGENKKDDNVVDADYTVIDDDKKKT) is disordered. The segment covering 583 to 593 (GPEGASGGFGG) has biased composition (gly residues).

This sequence belongs to the heat shock protein 70 family.

Acts as a chaperone. This Heliobacterium modesticaldum (strain ATCC 51547 / Ice1) protein is Chaperone protein DnaK.